Here is a 2530-residue protein sequence, read N- to C-terminus: Agglutinin-like protein 2 (2530 aa).

Residues 1–17 (MLLQFLLLSLCVSVATA) form the signal peptide. Disulfide bonds link Cys73/Cys150, Cys96/Cys112, Cys205/Cys297, and Cys227/Cys256. N-linked (GlcNAc...) asparagine glycans are attached at residues Asn253 and Asn315. 6 ALS repeats span residues 364-395 (TTIT…VDVP), 400-431 (TTVT…VQVP), 437-468 (VTTT…IREP), 473-504 (VTTT…IREP), 509-540 (VTTT…IREP), and 545-576 (VTTT…IREP). A glycan (N-linked (GlcNAc...) asparagine) is linked at Asn578. An ALS 7 repeat occupies 581-612 (VTTTEYWSQSYVTTSTITAPPGGTDTVIIREP). An N-linked (GlcNAc...) asparagine glycan is attached at Asn614. 7 ALS repeats span residues 617–648 (VTTT…IREP), 653–684 (VTTT…IREP), 689–720 (VTTT…IREP), 725–756 (VTTT…IREP), 761–792 (VTTT…IREP), 797–828 (VTTT…IREP), and 833–864 (VTTT…IREP). Asn866 carries N-linked (GlcNAc...) asparagine glycosylation. 4 ALS repeats span residues 869-900 (VTTT…IREP), 905-936 (VTTT…IREP), 941-972 (VTTT…IREP), and 977-1008 (VTTT…IREP). A compositionally biased stretch (low complexity) spans 954–967 (TTTVTGPPGGTDTV). The segment at 954 to 975 (TTTVTGPPGGTDTVIIREPPNP) is disordered. N-linked (GlcNAc...) asparagine glycosylation is present at Asn1010. ALS repeat units lie at residues 1013-1044 (VTTT…IREP), 1049-1077 (VTTT…TVII), 1085-1116 (VTTT…IREP), and 1121-1152 (VTTT…IREP). Asn1154 carries N-linked (GlcNAc...) asparagine glycosylation. 6 ALS repeats span residues 1157–1188 (VTTT…IREP), 1193–1224 (VTTT…IREP), 1229–1260 (VTTT…IREP), 1265–1296 (VTTT…IREP), 1301–1332 (VTTT…IREP), and 1337–1368 (VTTT…IREP). N-linked (GlcNAc...) asparagine glycosylation is present at Asn1370. Residues 1373 to 1404 (VTTTEYWSQSYATTTTVTAPPGGTATVIIREP) form an ALS 29 repeat. Asn1406 carries an N-linked (GlcNAc...) asparagine glycan. One copy of the ALS 30 repeat lies at 1409-1440 (VTTTEYWSQSYATTTTITAPPGDTDTVIIREP). A glycan (N-linked (GlcNAc...) asparagine) is linked at Asn1442. ALS repeat units lie at residues 1445 to 1476 (VTTT…IREP) and 1481 to 1512 (VTTT…IREP). The N-linked (GlcNAc...) asparagine glycan is linked to Asn1514. An ALS 33 repeat occupies 1517–1548 (VTTTEYWSQSYATTTTVTAPPGGTATVIIREP). Residue Asn1550 is glycosylated (N-linked (GlcNAc...) asparagine). An ALS 34 repeat occupies 1553–1584 (VTTTEYWSQSYATTTTITAPPGDTDTVIIREP). The N-linked (GlcNAc...) asparagine glycan is linked to Asn1586. The ALS 35 repeat unit spans residues 1589-1620 (VTTTEYWSQSYATTTTVTAPPGGTDTVIIREP). Residue Asn1622 is glycosylated (N-linked (GlcNAc...) asparagine). The ALS 36 repeat unit spans residues 1625 to 1656 (VTTTEYWSQSYATTTTVTAPPGGTATVIIREP). Residue Asn1658 is glycosylated (N-linked (GlcNAc...) asparagine). 2 ALS repeats span residues 1661–1692 (VTTT…IREP) and 1697–1728 (VTTT…IREP). N-linked (GlcNAc...) asparagine glycosylation occurs at Asn1730. The stretch at 1733-1764 (VTTTEYWSQSYATTTTVTAPPGGTDTVIIREP) is one ALS 39 repeat. Asn1766 carries N-linked (GlcNAc...) asparagine glycosylation. ALS repeat units lie at residues 1769 to 1800 (VTTT…IREP) and 1805 to 1836 (VTTT…IREP). Asn1838 carries an N-linked (GlcNAc...) asparagine glycan. ALS repeat units lie at residues 1841–1872 (VTTT…IREP) and 1877–1907 (VTTT…RIRE). N-linked (GlcNAc...) asparagine glycosylation occurs at Asn1910. 2 ALS repeats span residues 1913 to 1944 (VTTT…IREP) and 1949 to 1980 (VTTT…IREP). N-linked (GlcNAc...) asparagine glycosylation occurs at Asn1982. ALS repeat units follow at residues 1985 to 2016 (VTTT…IREP), 2021 to 2052 (VTTT…IREP), and 2057 to 2088 (VTTT…IREP). N-linked (GlcNAc...) asparagine glycosylation occurs at Asn2090. ALS repeat units lie at residues 2093–2124 (VTTT…IREP) and 2129–2157 (VTTT…SVII). Asn2197 carries an N-linked (GlcNAc...) asparagine glycan. Disordered stretches follow at residues 2200-2235 (VTHL…GSEN) and 2274-2494 (TTII…QQTT). Positions 2204–2233 (PSSSSKPVDIPSSDVVTSTNDNSLTSLTGS) are enriched in low complexity. N-linked (GlcNAc...) asparagine glycosylation occurs at Asn2281. Low complexity predominate over residues 2282-2296 (GSGKSKSGELSSTGS). Composition is skewed to polar residues over residues 2329-2420 (STET…SATA) and 2429-2452 (NGAT…TTNI). Residues Asn2444 and Asn2466 are each glycosylated (N-linked (GlcNAc...) asparagine). 2 stretches are compositionally biased toward low complexity: residues 2453 to 2471 (QGGN…TGEP) and 2482 to 2494 (SISQ…QQTT). Asp2507 is lipidated: GPI-anchor amidated aspartate. Residues 2508–2530 (GSGSIVQHSGWLYVLLTAISIFF) constitute a propeptide, removed in mature form.

Belongs to the ALS family. N-glycosylated and O-glycosylated. Post-translationally, the GPI-anchor is attached to the protein in the endoplasmic reticulum and serves to target the protein to the cell surface. There, the glucosamine-inositol phospholipid moiety is cleaved off and the GPI-modified mannoprotein is covalently attached via its lipidless GPI glycan remnant to the 1,6-beta-glucan of the outer cell wall layer.

The protein localises to the cell membrane. It is found in the secreted. The protein resides in the cell wall. Cell surface adhesion protein which mediates both yeast-to-host tissue adherence and yeast aggregation. Plays an important role in the pathogenesis of C.albicans infections. This Candida albicans (strain SC5314 / ATCC MYA-2876) (Yeast) protein is Agglutinin-like protein 2 (ALS2).